Reading from the N-terminus, the 492-residue chain is Bifunctional protein GlmU (492 aa).

The tract at residues 1-238 (MRDAAVVILA…AALVAGVNDR (238 aa)) is pyrophosphorylase. UDP-N-acetyl-alpha-D-glucosamine contacts are provided by residues 9–12 (LAAG), lysine 23, glutamine 80, and 85–86 (GT). A Mg(2+)-binding site is contributed by aspartate 111. The UDP-N-acetyl-alpha-D-glucosamine site is built by glycine 148, glutamate 163, asparagine 178, and asparagine 236. Residue asparagine 236 participates in Mg(2+) binding. The linker stretch occupies residues 239 to 259 (VQLADLAAVLNRRIVEGHQRA). The interval 260–492 (GVTIIDPAST…EDQGPEATGE (233 aa)) is N-acetyltransferase. Positions 341 and 359 each coordinate UDP-N-acetyl-alpha-D-glucosamine. Histidine 371 serves as the catalytic Proton acceptor. Positions 374 and 385 each coordinate UDP-N-acetyl-alpha-D-glucosamine. Acetyl-CoA contacts are provided by residues alanine 388, 394–395 (NY), serine 413, and alanine 431. A compositionally biased stretch (low complexity) spans 469 to 483 (EAAAAAGAGAGAAAE). The interval 469 to 492 (EAAAAAGAGAGAAAEDQGPEATGE) is disordered.

It in the N-terminal section; belongs to the N-acetylglucosamine-1-phosphate uridyltransferase family. In the C-terminal section; belongs to the transferase hexapeptide repeat family. As to quaternary structure, homotrimer. Mg(2+) is required as a cofactor.

It is found in the cytoplasm. The enzyme catalyses alpha-D-glucosamine 1-phosphate + acetyl-CoA = N-acetyl-alpha-D-glucosamine 1-phosphate + CoA + H(+). It catalyses the reaction N-acetyl-alpha-D-glucosamine 1-phosphate + UTP + H(+) = UDP-N-acetyl-alpha-D-glucosamine + diphosphate. Its pathway is nucleotide-sugar biosynthesis; UDP-N-acetyl-alpha-D-glucosamine biosynthesis; N-acetyl-alpha-D-glucosamine 1-phosphate from alpha-D-glucosamine 6-phosphate (route II): step 2/2. It functions in the pathway nucleotide-sugar biosynthesis; UDP-N-acetyl-alpha-D-glucosamine biosynthesis; UDP-N-acetyl-alpha-D-glucosamine from N-acetyl-alpha-D-glucosamine 1-phosphate: step 1/1. The protein operates within bacterial outer membrane biogenesis; LPS lipid A biosynthesis. Catalyzes the last two sequential reactions in the de novo biosynthetic pathway for UDP-N-acetylglucosamine (UDP-GlcNAc). The C-terminal domain catalyzes the transfer of acetyl group from acetyl coenzyme A to glucosamine-1-phosphate (GlcN-1-P) to produce N-acetylglucosamine-1-phosphate (GlcNAc-1-P), which is converted into UDP-GlcNAc by the transfer of uridine 5-monophosphate (from uridine 5-triphosphate), a reaction catalyzed by the N-terminal domain. This Mycolicibacterium vanbaalenii (strain DSM 7251 / JCM 13017 / BCRC 16820 / KCTC 9966 / NRRL B-24157 / PYR-1) (Mycobacterium vanbaalenii) protein is Bifunctional protein GlmU.